Here is a 725-residue protein sequence, read N- to C-terminus: Dolichyl-phosphate-mannose--protein mannosyltransferase 5 (725 aa).

Helical transmembrane passes span 34–54, 117–137, 145–165, 192–212, 219–239, and 256–276; these read QFAV…LYIP, YLWL…LTFF, SVIS…VTVS, IPFT…LGLN, GLFT…EILG, and VVAF…IHFE. MIR domains follow at residues 303–356, 368–427, and 439–495; these read PLQV…IETK, QREV…IRML, and LIKL…VESS. A glycan (N-linked (GlcNAc...) asparagine) is linked at Asn409. A run of 4 helical transmembrane segments spans residues 570–590, 619–639, 644–664, and 673–693; these read IYYL…LIAI, FYNN…PYCL, LYLH…SQYL, and IIGG…FYEF.

Belongs to the glycosyltransferase 39 family.

It localises to the endoplasmic reticulum membrane. It carries out the reaction a di-trans,poly-cis-dolichyl beta-D-mannosyl phosphate + L-seryl-[protein] = 3-O-(alpha-D-mannosyl)-L-seryl-[protein] + a di-trans,poly-cis-dolichyl phosphate + H(+). The enzyme catalyses a di-trans,poly-cis-dolichyl beta-D-mannosyl phosphate + L-threonyl-[protein] = 3-O-(alpha-D-mannosyl)-L-threonyl-[protein] + a di-trans,poly-cis-dolichyl phosphate + H(+). Its pathway is protein modification; protein glycosylation. Its function is as follows. Protein mannosyltransferase (PMT) involved in hyphal morphogenesis and drug sensitivity. Transfers mannose from Dol-P-mannose to Ser or Thr residues on proteins. PMT1, PMT2 and PMT4 account for most of the protein-O-glycosylation activity, while PMT5 and PMT6 may specifically modulate a much narrower spectrum of target proteins. Required for biofilm formation. This chain is Dolichyl-phosphate-mannose--protein mannosyltransferase 5, found in Candida albicans (strain SC5314 / ATCC MYA-2876) (Yeast).